A 180-amino-acid chain; its full sequence is Putative pre-16S rRNA nuclease (180 aa).

The span at 1 to 12 (MDAQERSERPDP) shows a compositional bias: basic and acidic residues. Positions 1–23 (MDAQERSERPDPATDPGRGRRLG) are disordered.

This sequence belongs to the YqgF nuclease family.

The protein localises to the cytoplasm. Its function is as follows. Could be a nuclease involved in processing of the 5'-end of pre-16S rRNA. This chain is Putative pre-16S rRNA nuclease, found in Nocardia farcinica (strain IFM 10152).